The sequence spans 257 residues: UPF0246 protein LPC_0782 (257 aa).

The protein belongs to the UPF0246 family.

This Legionella pneumophila (strain Corby) protein is UPF0246 protein LPC_0782.